A 443-amino-acid polypeptide reads, in one-letter code: Gasdermin-A2 (443 aa).

The tract at residues 1 to 249 (MSMFEDVTRA…QGSTVQMISG (249 aa)) is triggers pyroptosis. A cardiolipin is bound at residue 9-13 (RALAR). The next 4 membrane-spanning stretches (beta stranded) occupy residues 78 to 95 (NFSFKNMLDVRVEGDVEV), 99 to 120 (MKVKGTVGLSQSSTLEVQMLSV), 164 to 179 (VTLKRASNAISKFSLN), and 183 to 197 (LGLQGSVNHKEAVTI). The stretch at 249–312 (GEMHEDFKTL…GALDKGHEVT (64 aa)) forms a coiled coil.

Belongs to the gasdermin family. Homooligomer; homooligomeric ring-shaped pore complex containing 18-36 subunits when inserted in the membrane. Cleavage relieves autoinhibition by releasing the N-terminal moiety (Gasdermin-A2, N-terminal) that initiates pyroptosis. In contrast to Gsdma, not cleaved by bacterial effector protein SpeB. Post-translationally, palmitoylated. In terms of tissue distribution, expressed in the gastrointestinal tract, specifically from the middle to the upper region of the gastric mucosa in the glandular stomach.

The protein localises to the cytoplasm. The protein resides in the perinuclear region. It is found in the cytosol. It localises to the cell membrane. The full-length protein before cleavage is inactive: intramolecular interactions between N- and C-terminal domains mediate autoinhibition in the absence of activation signal. The intrinsic pyroptosis-inducing activity is carried by the released N-terminal moiety (Gasdermin-A2, N-terminal). In terms of biological role, this form constitutes the precursor of the pore-forming protein and acts as a sensor of infection: upon bacterial infection, specifically cleaved by some bacterial effector protein, releasing the N-terminal moiety (Gasdermin-A2, N-terminal) that binds to membranes and forms pores, triggering pyroptosis. Pore-forming protein that causes membrane permeabilization and pyroptosis. Released upon cleavage of Gasdermin-A2, and binds to membrane inner leaflet lipids. Homooligomerizes within the membrane and forms pores of 10-15 nanometers (nm) of inner diameter, triggering pyroptosis. Binds to membrane inner leaflet lipids, such as phosphatidylinositol (4,5)-bisphosphate. The polypeptide is Gasdermin-A2 (Mus musculus (Mouse)).